Consider the following 150-residue polypeptide: D-aminoacyl-tRNA deacylase (150 aa).

The short motif at 138-139 (GP) is the Gly-cisPro motif, important for rejection of L-amino acids element.

This sequence belongs to the DTD family. Homodimer.

Its subcellular location is the cytoplasm. It catalyses the reaction glycyl-tRNA(Ala) + H2O = tRNA(Ala) + glycine + H(+). The catalysed reaction is a D-aminoacyl-tRNA + H2O = a tRNA + a D-alpha-amino acid + H(+). An aminoacyl-tRNA editing enzyme that deacylates mischarged D-aminoacyl-tRNAs. Also deacylates mischarged glycyl-tRNA(Ala), protecting cells against glycine mischarging by AlaRS. Acts via tRNA-based rather than protein-based catalysis; rejects L-amino acids rather than detecting D-amino acids in the active site. By recycling D-aminoacyl-tRNA to D-amino acids and free tRNA molecules, this enzyme counteracts the toxicity associated with the formation of D-aminoacyl-tRNA entities in vivo and helps enforce protein L-homochirality. In Cytophaga hutchinsonii (strain ATCC 33406 / DSM 1761 / CIP 103989 / NBRC 15051 / NCIMB 9469 / D465), this protein is D-aminoacyl-tRNA deacylase.